We begin with the raw amino-acid sequence, 203 residues long: Orotate phosphoribosyltransferase (203 aa).

Residues Arg-94, Lys-98, His-100, and 120 to 128 each bind 5-phospho-alpha-D-ribose 1-diphosphate; that span reads EDLISTGGS. Residue Ser-124 participates in orotate binding.

Belongs to the purine/pyrimidine phosphoribosyltransferase family. PyrE subfamily. Homodimer. It depends on Mg(2+) as a cofactor.

The catalysed reaction is orotidine 5'-phosphate + diphosphate = orotate + 5-phospho-alpha-D-ribose 1-diphosphate. The protein operates within pyrimidine metabolism; UMP biosynthesis via de novo pathway; UMP from orotate: step 1/2. In terms of biological role, catalyzes the transfer of a ribosyl phosphate group from 5-phosphoribose 1-diphosphate to orotate, leading to the formation of orotidine monophosphate (OMP). This chain is Orotate phosphoribosyltransferase, found in Staphylococcus aureus (strain MSSA476).